Here is a 796-residue protein sequence, read N- to C-terminus: Protocadherin beta-3 (796 aa).

Residues 1–26 (MEAGGERFLRQRQVLLLFVFLGGSLA) form the signal peptide. Residues 27–690 (GSESRRYSVA…AQADLLTVYL (664 aa)) are Extracellular-facing. Cadherin domains lie at 35–133 (VAEE…SPVF), 138–242 (MHLK…APEF), 247–347 (YEVA…PPEL), 352–451 (VNSP…APAF), and 456–561 (YTLF…SPFV). Asparagine 169 carries an N-linked (GlcNAc...) asparagine glycan. Asparagine 418 and asparagine 436 each carry an N-linked (GlcNAc...) asparagine glycan. Asparagine 567 carries N-linked (GlcNAc...) asparagine glycosylation. Residues 568–671 (GSAPCTELVP…LVDGFSQPYL (104 aa)) enclose the Cadherin 6 domain. Residues 691–711 (VVALASVSSLFLFSVLLFVAV) traverse the membrane as a helical segment. The Cytoplasmic segment spans residues 712–796 (RLCRRSRAAS…PSFRKSFEFS (85 aa)).

It localises to the cell membrane. Functionally, potential calcium-dependent cell-adhesion protein. May be involved in the establishment and maintenance of specific neuronal connections in the brain. This is Protocadherin beta-3 (PCDHB3) from Pan troglodytes (Chimpanzee).